The sequence spans 479 residues: ATP synthase subunit beta (479 aa).

G153–T160 serves as a coordination point for ATP.

It belongs to the ATPase alpha/beta chains family. F-type ATPases have 2 components, CF(1) - the catalytic core - and CF(0) - the membrane proton channel. CF(1) has five subunits: alpha(3), beta(3), gamma(1), delta(1), epsilon(1). CF(0) has three main subunits: a(1), b(2) and c(9-12). The alpha and beta chains form an alternating ring which encloses part of the gamma chain. CF(1) is attached to CF(0) by a central stalk formed by the gamma and epsilon chains, while a peripheral stalk is formed by the delta and b chains.

The protein localises to the cell membrane. The enzyme catalyses ATP + H2O + 4 H(+)(in) = ADP + phosphate + 5 H(+)(out). Increases 2-fold following exposure to low pH. Functionally, produces ATP from ADP in the presence of a proton gradient across the membrane. The catalytic sites are hosted primarily by the beta subunits. The sequence is that of ATP synthase subunit beta from Lactobacillus acidophilus (strain ATCC 700396 / NCK56 / N2 / NCFM).